The sequence spans 134 residues: Large ribosomal subunit protein uL18 (134 aa).

The interval 1-25 is disordered; that stretch reads MSNTAQNEKRLPVGKDISTRRRTAR. The span at 7–19 shows a compositional bias: basic and acidic residues; it reads NEKRLPVGKDIST.

This sequence belongs to the universal ribosomal protein uL18 family. Part of the 50S ribosomal subunit; part of the 5S rRNA/L5/L18/L25 subcomplex. Contacts the 5S and 23S rRNAs.

Functionally, this is one of the proteins that bind and probably mediate the attachment of the 5S RNA into the large ribosomal subunit, where it forms part of the central protuberance. The polypeptide is Large ribosomal subunit protein uL18 (Corynebacterium jeikeium (strain K411)).